The primary structure comprises 420 residues: Pyrophosphate--fructose 6-phosphate 1-phosphotransferase (420 aa).

Glycine 13 lines the diphosphate pocket. Substrate-binding positions include 142 to 144 (TVD), 190 to 192 (MGR), glutamate 247, and 297 to 300 (YLQR). Residue aspartate 144 is the Proton acceptor of the active site.

Belongs to the phosphofructokinase type A (PFKA) family. PPi-dependent PFK group II subfamily. Clade 'B2' sub-subfamily. As to quaternary structure, homodimer. It depends on Mg(2+) as a cofactor. Requires Co(2+) as cofactor. Mn(2+) serves as cofactor.

The protein resides in the cytoplasm. The enzyme catalyses beta-D-fructose 6-phosphate + diphosphate = beta-D-fructose 1,6-bisphosphate + phosphate + H(+). It participates in carbohydrate degradation; glycolysis; D-glyceraldehyde 3-phosphate and glycerone phosphate from D-glucose: step 3/4. Its activity is regulated as follows. Non-allosteric. In terms of biological role, catalyzes the phosphorylation of D-fructose 6-phosphate, the first committing step of glycolysis. Uses inorganic phosphate (PPi) as phosphoryl donor instead of ATP like common ATP-dependent phosphofructokinases (ATP-PFKs), which renders the reaction reversible, and can thus function both in glycolysis and gluconeogenesis. Consistently, PPi-PFK can replace the enzymes of both the forward (ATP-PFK) and reverse (fructose-bisphosphatase (FBPase)) reactions. This chain is Pyrophosphate--fructose 6-phosphate 1-phosphotransferase, found in Methylococcus capsulatus (strain ATCC 33009 / NCIMB 11132 / Bath).